Here is a 299-residue protein sequence, read N- to C-terminus: UDP-N-acetylenolpyruvoylglucosamine reductase (299 aa).

The 166-residue stretch at 28 to 193 (KVGGPADILA…LSAKFELQAG (166 aa)) folds into the FAD-binding PCMH-type domain. Arg172 is a catalytic residue. The active-site Proton donor is the Ser222. Glu292 is a catalytic residue.

It depends on FAD as a cofactor.

The protein localises to the cytoplasm. The catalysed reaction is UDP-N-acetyl-alpha-D-muramate + NADP(+) = UDP-N-acetyl-3-O-(1-carboxyvinyl)-alpha-D-glucosamine + NADPH + H(+). It functions in the pathway cell wall biogenesis; peptidoglycan biosynthesis. Functionally, cell wall formation. This is UDP-N-acetylenolpyruvoylglucosamine reductase from Lactococcus lactis subsp. cremoris (strain MG1363).